Here is a 325-residue protein sequence, read N- to C-terminus: MAPKQLKKIENPVVSSSEEEESASSGESATSGEESDSSADSPVKESSKKPVVVSKPSGSKTTTKPESSTAAKRSFEKTDEMSKKKSKNSMGEEDVKKKDETLKKNLFVRLFTEEDEAILLQGFLDFATKKENPSDHIDDFYESIKNSISFDVTKPQLVTKIGNLKKKFNGRVSKGLKKGKNEEVMVFSKASDQNCFDLSRKIWGSNGVLYSKSKNMRQVQLGGSVKVDEDDQEPQKHRFVISTLSSGQELVSYLKVENPNSLGVDDTKWSAKLDKIKDGKQKRKMEKNLKKIQAKEEELSMMRSEFVAAVTNVLSKQDNASYSCK.

A disordered region spans residues 1–98 (MAPKQLKKIE…SMGEEDVKKK (98 aa)). Composition is skewed to low complexity over residues 23 to 32 (ASSGESATSG) and 49 to 69 (KPVV…ESST). Basic and acidic residues predominate over residues 73-83 (RSFEKTDEMSK).

Belongs to the GeBP family.

This chain is Probable transcription factor At4g01260, found in Arabidopsis thaliana (Mouse-ear cress).